A 197-amino-acid chain; its full sequence is Large ribosomal subunit protein bL25 (197 aa).

This sequence belongs to the bacterial ribosomal protein bL25 family. CTC subfamily. Part of the 50S ribosomal subunit; part of the 5S rRNA/L5/L18/L25 subcomplex. Contacts the 5S rRNA. Binds to the 5S rRNA independently of L5 and L18.

Its function is as follows. This is one of the proteins that binds to the 5S RNA in the ribosome where it forms part of the central protuberance. The polypeptide is Large ribosomal subunit protein bL25 (Hydrogenobaculum sp. (strain Y04AAS1)).